The chain runs to 273 residues: GATA-type zinc finger protein 1 (273 aa).

Disordered regions lie at residues 99–143 and 172–201; these read RDSK…ERVD and SSRSQESPADAVGGPAAHPGGTEAHSAGSE. A GATA-type zinc finger spans residues 208-232; sequence CASCRTQRTPLWRDAEDGTPLCNAC.

The protein localises to the nucleus. Transcriptional regulator that plays a key role in germ cell development. Determines the oogenic fate by activating key genes for the oogenic program and meiotic prophase entry. Acts downstream of bone morphogenetic protein (BMP) by regulating expression of genes required for the oogenic programs, which are repressed by Polycomb activities in sexually uncommitted germ cells. Regulates expression of STRA8, a central downstream effector for the meiotic program. Acts independently of retinoic acid (RA). In males, not required for germ-cell sex determination, but required to allow the spermatogonia to efficiently accomplish the meiotic prophase. This Homo sapiens (Human) protein is GATA-type zinc finger protein 1.